Reading from the N-terminus, the 439-residue chain is MMSGEHTLKAVRGSFIDVTRTIDNPEEIASALRFIEDGLLLIKQGKVEWFGEWENGKHQIPDTIRVRDYRGKLIVPGFVDTHIHYPQSEMVGAYGEQLLEWLNKHTFPTERRYEDLEYAREMSAFFIKQLLRNGTTTALVFGTVHPQSVDALFEAASHINMRMIAGKVMMDRNAPDYLLDTAESSYHQSKELIERWHKNGRLLYAITPRFAPTSSPEQMAMAQRLKEEYPDTWVHTHLCENKDEIAWVKSLYPDHDGYLDVYHQYGLTGKNCVFAHCVHLEEKEWDRLSETKSSIAFCPTSNLYLGSGLFNLKKAWQKKVKVGMGTDIGAGTTFNMLQTLNEAYKVLQLQGYRLSAYEAFYLATLGGAKSLGLDDLIGNFLPGKEADFVVMEPTATPLQQLRYDNSVSLVDKLFVMMTLGDDRSIYRTYVDGRLVYERN.

The Zn(2+) site is built by histidine 82 and histidine 84. Residues 84–87, 209–210, 237–240, and aspartate 327 contribute to the substrate site; these read HYPQ, RF, and HLCE. Residues histidine 237 and aspartate 327 each coordinate Zn(2+).

The protein belongs to the metallo-dependent hydrolases superfamily. ATZ/TRZ family. Zn(2+) serves as cofactor.

It carries out the reaction guanine + H2O + H(+) = xanthine + NH4(+). It functions in the pathway purine metabolism; guanine degradation; xanthine from guanine: step 1/1. In terms of biological role, catalyzes the hydrolytic deamination of guanine, producing xanthine and ammonia. This is Guanine deaminase (guaD) from Escherichia coli (strain K12).